Here is a 414-residue protein sequence, read N- to C-terminus: Serine hydroxymethyltransferase (414 aa).

(6S)-5,6,7,8-tetrahydrofolate-binding positions include Leu117 and 121–123 (GHL). Residue Lys226 is modified to N6-(pyridoxal phosphate)lysine.

Belongs to the SHMT family. In terms of assembly, homodimer. It depends on pyridoxal 5'-phosphate as a cofactor.

It is found in the cytoplasm. The catalysed reaction is (6R)-5,10-methylene-5,6,7,8-tetrahydrofolate + glycine + H2O = (6S)-5,6,7,8-tetrahydrofolate + L-serine. Its pathway is one-carbon metabolism; tetrahydrofolate interconversion. The protein operates within amino-acid biosynthesis; glycine biosynthesis; glycine from L-serine: step 1/1. Functionally, catalyzes the reversible interconversion of serine and glycine with tetrahydrofolate (THF) serving as the one-carbon carrier. This reaction serves as the major source of one-carbon groups required for the biosynthesis of purines, thymidylate, methionine, and other important biomolecules. Also exhibits THF-independent aldolase activity toward beta-hydroxyamino acids, producing glycine and aldehydes, via a retro-aldol mechanism. The polypeptide is Serine hydroxymethyltransferase (Dictyoglomus turgidum (strain DSM 6724 / Z-1310)).